The primary structure comprises 461 residues: Coagulation factor IX (461 aa).

Positions Met1 to Cys28 are cleaved as a signal peptide. Residues Thr29 to Arg46 constitute a propeptide that is removed on maturation. 11 residues coordinate Ca(2+): Tyr47, Asn48, Glu53, Glu54, Glu61, Glu63, Glu66, Glu67, Glu72, Glu73, and Glu76. Positions Tyr47–Val92 constitute a Gla domain. A 4-carboxyglutamate mark is found at Glu53, Glu54, Glu61, Glu63, Glu66, Glu67, Glu72, Glu73, Glu76, Glu79, and Glu82. Position 61 (Glu61) interacts with Mg(2+). A disulfide bridge connects residues Cys64 and Cys69. Glu66 serves as a coordination point for Mg(2+). Glu72 provides a ligand contact to Mg(2+). Glu76 serves as a coordination point for Mg(2+). Position 82 (Glu82) interacts with Ca(2+). Glu82 contacts Mg(2+). An O-linked (GalNAc...) threonine glycan is attached at Thr85. Positions 86, 93, 94, and 96 each coordinate Ca(2+). Glu86 is modified (4-carboxyglutamate). Position 86 (Glu86) interacts with Mg(2+). Residues Asp93–Glu129 form the EGF-like 1; calcium-binding domain. Cystine bridges form between Cys97-Cys108, Cys102-Cys117, Cys119-Cys128, Cys134-Cys145, Cys141-Cys155, Cys157-Cys170, Cys178-Cys335, Cys252-Cys268, Cys382-Cys396, and Cys407-Cys435. O-linked (Glc...) serine glycosylation occurs at Ser99. Ser107 carries O-linked (Fuc...) serine glycosylation. The Ca(2+) site is built by Asp110 and Asp111. Residue Asp110 is modified to (3R)-3-hydroxyaspartate. The residue at position 114 (Ser114) is a Phosphoserine. One can recognise an EGF-like 2 domain in the interval Leu130 to Glu171. Residues Ala192–Arg226 constitute a propeptide, activation peptide. Sulfotyrosine is present on Tyr201. Ser204 carries the post-translational modification Phosphoserine. The residue at position 205 (Thr205) is a Phosphothreonine; alternate. Thr205 carries O-linked (GalNAc...) threonine; alternate glycosylation. The N-linked (GlcNAc...) asparagine glycan is linked to Asn213. 2 O-linked (GalNAc...) threonine glycosylation sites follow: Thr215 and Thr225. The 233-residue stretch at Val227 to Lys459 folds into the Peptidase S1 domain. His267 functions as the Charge relay system in the catalytic mechanism. Residues Glu281, Asn283, Glu286, Glu288, and Glu291 each coordinate Ca(2+). Asp315 functions as the Charge relay system in the catalytic mechanism. Catalysis depends on Ser411, which acts as the Charge relay system.

The protein belongs to the peptidase S1 family. As to quaternary structure, heterodimer of a light chain and a heavy chain; disulfide-linked. Interacts (inactive and activated) with F11 (activated) in calcium-dependent manner. Interacts with SERPINC1. Post-translationally, activated by factor XIa, which excises the activation peptide. The propeptide can also be removed by snake venom protease. In terms of processing, the iron and 2-oxoglutarate dependent 3-hydroxylation of aspartate and asparagine is (R) stereospecific within EGF domains. Activated by coagulation factor VIIa-tissue factor (F7-F3) complex in calcium-dependent manner. Predominantly O-glucosylated at Ser-99 by POGLUT1 in vitro.

It localises to the secreted. It carries out the reaction Selective cleavage of Arg-|-Ile bond in factor X to form factor Xa.. In terms of biological role, factor IX is a vitamin K-dependent plasma protein that participates in the intrinsic pathway of blood coagulation by converting factor X to its active form in the presence of Ca(2+) ions, phospholipids, and factor VIIIa. The chain is Coagulation factor IX (F9) from Pan troglodytes (Chimpanzee).